The chain runs to 542 residues: CTP synthase (542 aa).

The amidoligase domain stretch occupies residues 1–265 (MARYVFITGG…DSEVLSAFGI (265 aa)). S13 contacts CTP. S13 provides a ligand contact to UTP. An ATP-binding site is contributed by 14–19 (SLGKGI). Residue Y54 coordinates L-glutamine. Residue D71 participates in ATP binding. Residues D71 and E139 each coordinate Mg(2+). CTP-binding positions include 146 to 148 (DIE), 186 to 191 (KTKPTQ), and K222. Residues 186–191 (KTKPTQ) and K222 each bind UTP. The 251-residue stretch at 291-541 (TIAVVGKYTG…IEAAIEQSRL (251 aa)) folds into the Glutamine amidotransferase type-1 domain. G353 serves as a coordination point for L-glutamine. C380 serves as the catalytic Nucleophile; for glutamine hydrolysis. L-glutamine is bound by residues 381-384 (FGMQ), E404, and R469. Residues H514 and E516 contribute to the active site.

Belongs to the CTP synthase family. As to quaternary structure, homotetramer.

It catalyses the reaction UTP + L-glutamine + ATP + H2O = CTP + L-glutamate + ADP + phosphate + 2 H(+). It carries out the reaction L-glutamine + H2O = L-glutamate + NH4(+). The catalysed reaction is UTP + NH4(+) + ATP = CTP + ADP + phosphate + 2 H(+). The protein operates within pyrimidine metabolism; CTP biosynthesis via de novo pathway; CTP from UDP: step 2/2. Its activity is regulated as follows. Allosterically activated by GTP, when glutamine is the substrate; GTP has no effect on the reaction when ammonia is the substrate. The allosteric effector GTP functions by stabilizing the protein conformation that binds the tetrahedral intermediate(s) formed during glutamine hydrolysis. Inhibited by the product CTP, via allosteric rather than competitive inhibition. Functionally, catalyzes the ATP-dependent amination of UTP to CTP with either L-glutamine or ammonia as the source of nitrogen. Regulates intracellular CTP levels through interactions with the four ribonucleotide triphosphates. The sequence is that of CTP synthase from Brucella melitensis biotype 1 (strain ATCC 23456 / CCUG 17765 / NCTC 10094 / 16M).